A 330-amino-acid polypeptide reads, in one-letter code: Membrane progestin receptor gamma (330 aa).

The Cytoplasmic segment spans residues 1–51; sequence MLSLKLPRLFSIDQIPQVFHEQGILFGYRHPQSSATACILSLFQMTNETLN. A helical transmembrane segment spans residues 52–72; it reads IWTHLLPFWFFAWRFVTALYM. Residues 73–80 are Extracellular-facing; sequence TDIKNDSY. Residues 81-101 traverse the membrane as a helical segment; sequence SWPMLVYMCTSCVYPLVSSCA. Residues 102 to 113 lie on the Cytoplasmic side of the membrane; the sequence is HTFSSMSKNARH. Residues 114–134 form a helical membrane-spanning segment; that stretch reads ICYFLDYGAVNLFSLGSAIAY. Residues 135 to 141 lie on the Extracellular side of the membrane; the sequence is SAYTFPD. A helical membrane pass occupies residues 142 to 162; it reads ALMCTTFHDYYVALAVLNTIL. At 163–186 the chain is on the cytoplasmic side; sequence STGLSCYSRFLEIQKPRLCKVIRV. The chain crosses the membrane as a helical span at residues 187–207; sequence LAFAYPYTWDSLPIFYRLFLF. The Extracellular portion of the chain corresponds to 208 to 253; sequence PGESAQNEATSYHQKHMIMTLLASFLYSAHLPERLAPGRFDYIGHS. The helical transmembrane segment at 254 to 274 threads the bilayer; that stretch reads HQLFHVCVILATHMQMEAILL. Residues 275 to 294 are Cytoplasmic-facing; sequence DKTLRKEWLLATSKPFSFSQ. Residues 295 to 315 traverse the membrane as a helical segment; that stretch reads IAGAILLCIIFSLSNIIYFSA. Residues 316-330 lie on the Extracellular side of the membrane; it reads ALYRIPKPELHKKET.

This sequence belongs to the ADIPOR family. As to expression, expressed in the brain, lung, kidney, colon, adrenal and lung.

It localises to the cell membrane. In terms of biological role, plasma membrane progesterone (P4) receptor coupled to G proteins. Seems to act through a G(i) mediated pathway. May be involved in oocyte maturation. This Homo sapiens (Human) protein is Membrane progestin receptor gamma.